The primary structure comprises 1789 residues: Mediator of RNA polymerase II transcription subunit 12 (1789 aa).

Disordered stretches follow at residues 1–138 (MTSR…QRRG), 156–288 (SSPT…GSSA), 1592–1656 (IGTA…GWHA), and 1707–1727 (THLNLGNNSNPPTPSPMNPTR). Low complexity-rich tracts occupy residues 25-66 (SQQR…QQQQ) and 81-98 (TRNNNHNNFSNPNNTLNN). Residues 107 to 124 (QDPTSIVSPADPSGSSPA) are compositionally biased toward polar residues. The span at 220–229 (AVPDHSRREQ) shows a compositional bias: basic and acidic residues. 4 stretches are compositionally biased toward low complexity: residues 271 to 288 (RSSALATASSSSTTGSSA), 1592 to 1628 (IGTATGTGSPAPGTTPTHTPGVTPGPQNAVGAGSAVS), 1647 to 1656 (QQAQAQGWHA), and 1707 to 1716 (THLNLGNNSN).

The protein belongs to the Mediator complex subunit 12 family. As to quaternary structure, component of the srb8-11 complex, which itself associates with the Mediator complex.

The protein resides in the nucleus. Functionally, component of the srb8-11 complex. The srb8-11 complex is a regulatory module of the Mediator complex which is itself involved in regulation of basal and activated RNA polymerase II-dependent transcription. The srb8-11 complex may be involved in the transcriptional repression of a subset of genes regulated by Mediator. It may inhibit the association of the Mediator complex with RNA polymerase II to form the holoenzyme complex. This is Mediator of RNA polymerase II transcription subunit 12 (srb8) from Neurospora crassa (strain ATCC 24698 / 74-OR23-1A / CBS 708.71 / DSM 1257 / FGSC 987).